A 315-amino-acid chain; its full sequence is L-lactate dehydrogenase (315 aa).

Residues valine 17, aspartate 38, lysine 43, tyrosine 69, and 83–84 (GA) contribute to the NAD(+) site. Residues glutamine 86, arginine 92, and 124-127 (NPVD) contribute to the substrate site. Residues 122-124 (ATN) and serine 147 each bind NAD(+). Residue 152 to 155 (DTAR) coordinates substrate. Positions 157 and 172 each coordinate beta-D-fructose 1,6-bisphosphate. Histidine 179 serves as the catalytic Proton acceptor. Residue tyrosine 224 is modified to Phosphotyrosine. Residue threonine 233 participates in substrate binding.

The protein belongs to the LDH/MDH superfamily. LDH family. As to quaternary structure, homotetramer.

It is found in the cytoplasm. The catalysed reaction is (S)-lactate + NAD(+) = pyruvate + NADH + H(+). The protein operates within fermentation; pyruvate fermentation to lactate; (S)-lactate from pyruvate: step 1/1. Its activity is regulated as follows. Allosterically activated by fructose 1,6-bisphosphate (FBP). In terms of biological role, catalyzes the conversion of lactate to pyruvate. This chain is L-lactate dehydrogenase, found in Bacillus pumilus (strain SAFR-032).